The following is a 136-amino-acid chain: Glutaredoxin-C7 (136 aa).

In terms of domain architecture, Glutaredoxin spans 29 to 135 (LLRIESLASE…PLLKDAGALW (107 aa)). Residues C49 and C52 are joined by a disulfide bond. The Responsive for interaction with TGA factors motif lies at 133-136 (ALWL).

This sequence belongs to the glutaredoxin family. CC-type subfamily. Interacts with TGA2, TGA3, TGA7 and PAN. Interacts with TGA9 and TGA10 in the nucleus. As to expression, highly expressed in inflorescences, roots, and siliques. Expressed at lower levels in mature flowers.

The protein localises to the cytoplasm. The protein resides in the nucleus. Functionally, has a glutathione-disulfide oxidoreductase activity in the presence of NADPH and glutathione reductase. Reduces low molecular weight disulfides and proteins. Involved in flower development as a regulator of petal primorida initiation and further petal morphogenesis. May mediate post-translational modifications of target proteins required for normal petal organ initiation and morphogenesis. ROXY1/TGA protein interactions can occur in vivo and support their biological relevance in petal development. May be involved in the regulation of the floral regulator class C gene AG (AGAMOUS). The sequence is that of Glutaredoxin-C7 (GRXC7) from Arabidopsis thaliana (Mouse-ear cress).